Consider the following 469-residue polypeptide: Citrate synthase, mitochondrial (469 aa).

A mitochondrion-targeting transit peptide spans 1 to 31; the sequence is MTLLTASSRAAARLLGAKNSSCIIFAARHAS. Catalysis depends on residues His304 and His350. Arg359 contributes to the oxaloacetate binding site. Asp405 is a catalytic residue. Residues Arg431 and Arg451 each contribute to the oxaloacetate site.

Belongs to the citrate synthase family. Homodimer.

It is found in the mitochondrion matrix. It carries out the reaction oxaloacetate + acetyl-CoA + H2O = citrate + CoA + H(+). It participates in carbohydrate metabolism; tricarboxylic acid cycle; isocitrate from oxaloacetate: step 1/2. Functionally, key enzyme of the Krebs tricarboxylic acid cycle which catalyzes the synthesis of citrate from acetyl coenzyme A and oxaloacetate. In Amblyrhynchus cristatus (Galapagos marine iguana), this protein is Citrate synthase, mitochondrial (CS).